The sequence spans 1076 residues: Isoleucine--tRNA ligase (1076 aa).

Residues 47 to 57 carry the 'HIGH' region motif; sequence PYTTGQIHLGT. Positions 591-595 match the 'KMSKS' region motif; it reads KMSKS. K594 lines the ATP pocket.

This sequence belongs to the class-I aminoacyl-tRNA synthetase family. IleS type 2 subfamily. In terms of assembly, monomer. Zn(2+) serves as cofactor.

The protein localises to the cytoplasm. It carries out the reaction tRNA(Ile) + L-isoleucine + ATP = L-isoleucyl-tRNA(Ile) + AMP + diphosphate. In terms of biological role, catalyzes the attachment of isoleucine to tRNA(Ile). As IleRS can inadvertently accommodate and process structurally similar amino acids such as valine, to avoid such errors it has two additional distinct tRNA(Ile)-dependent editing activities. One activity is designated as 'pretransfer' editing and involves the hydrolysis of activated Val-AMP. The other activity is designated 'posttransfer' editing and involves deacylation of mischarged Val-tRNA(Ile). This Methanoregula boonei (strain DSM 21154 / JCM 14090 / 6A8) protein is Isoleucine--tRNA ligase.